Here is a 180-residue protein sequence, read N- to C-terminus: Peptide deformylase (180 aa).

2 residues coordinate Fe cation: Cys96 and His138. Glu139 is a catalytic residue. His142 lines the Fe cation pocket.

Belongs to the polypeptide deformylase family. Requires Fe(2+) as cofactor.

It catalyses the reaction N-terminal N-formyl-L-methionyl-[peptide] + H2O = N-terminal L-methionyl-[peptide] + formate. Functionally, removes the formyl group from the N-terminal Met of newly synthesized proteins. Requires at least a dipeptide for an efficient rate of reaction. N-terminal L-methionine is a prerequisite for activity but the enzyme has broad specificity at other positions. This is Peptide deformylase from Rhodopseudomonas palustris (strain BisA53).